The following is a 219-amino-acid chain: NADH-quinone oxidoreductase subunit C (219 aa).

Belongs to the complex I 30 kDa subunit family. NDH-1 is composed of 14 different subunits. Subunits NuoB, C, D, E, F, and G constitute the peripheral sector of the complex.

The protein resides in the cell inner membrane. The catalysed reaction is a quinone + NADH + 5 H(+)(in) = a quinol + NAD(+) + 4 H(+)(out). Functionally, NDH-1 shuttles electrons from NADH, via FMN and iron-sulfur (Fe-S) centers, to quinones in the respiratory chain. The immediate electron acceptor for the enzyme in this species is believed to be ubiquinone. Couples the redox reaction to proton translocation (for every two electrons transferred, four hydrogen ions are translocated across the cytoplasmic membrane), and thus conserves the redox energy in a proton gradient. This is NADH-quinone oxidoreductase subunit C from Methylorubrum populi (strain ATCC BAA-705 / NCIMB 13946 / BJ001) (Methylobacterium populi).